The chain runs to 379 residues: Cobalt-precorrin-5B C(1)-methyltransferase (379 aa).

It belongs to the CbiD family.

The enzyme catalyses Co-precorrin-5B + S-adenosyl-L-methionine = Co-precorrin-6A + S-adenosyl-L-homocysteine. The protein operates within cofactor biosynthesis; adenosylcobalamin biosynthesis; cob(II)yrinate a,c-diamide from sirohydrochlorin (anaerobic route): step 6/10. Functionally, catalyzes the methylation of C-1 in cobalt-precorrin-5B to form cobalt-precorrin-6A. The sequence is that of Cobalt-precorrin-5B C(1)-methyltransferase from Salmonella arizonae (strain ATCC BAA-731 / CDC346-86 / RSK2980).